The chain runs to 170 residues: Lipoprotein signal peptidase (170 aa).

The next 3 membrane-spanning stretches (helical) occupy residues 13-33 (IFISILVFFDQWSKYLVVKYI), 72-92 (LFFLIIPIIILIFVFSFALKE), and 96-113 (IARIALVLILSGGIGNII). Catalysis depends on residues Asp124 and Asp146. Residues 142–162 (FNFADSYVVIGITLFIIYDLF) form a helical membrane-spanning segment.

This sequence belongs to the peptidase A8 family.

It is found in the cell inner membrane. The enzyme catalyses Release of signal peptides from bacterial membrane prolipoproteins. Hydrolyzes -Xaa-Yaa-Zaa-|-(S,diacylglyceryl)Cys-, in which Xaa is hydrophobic (preferably Leu), and Yaa (Ala or Ser) and Zaa (Gly or Ala) have small, neutral side chains.. It functions in the pathway protein modification; lipoprotein biosynthesis (signal peptide cleavage). Its function is as follows. This protein specifically catalyzes the removal of signal peptides from prolipoproteins. This chain is Lipoprotein signal peptidase, found in Borrelia turicatae (strain 91E135).